The following is a 169-amino-acid chain: Peptide methionine sulfoxide reductase MsrA (169 aa).

Cys-10 is a catalytic residue.

It belongs to the MsrA Met sulfoxide reductase family.

The enzyme catalyses L-methionyl-[protein] + [thioredoxin]-disulfide + H2O = L-methionyl-(S)-S-oxide-[protein] + [thioredoxin]-dithiol. The catalysed reaction is [thioredoxin]-disulfide + L-methionine + H2O = L-methionine (S)-S-oxide + [thioredoxin]-dithiol. In terms of biological role, has an important function as a repair enzyme for proteins that have been inactivated by oxidation. Catalyzes the reversible oxidation-reduction of methionine sulfoxide in proteins to methionine. The protein is Peptide methionine sulfoxide reductase MsrA of Streptococcus equi subsp. zooepidemicus (strain MGCS10565).